Reading from the N-terminus, the 25-residue chain is Caerin-1.5 (25 aa).

Leucine amide is present on L25.

As to expression, expressed by the skin parotoid and/or rostral glands.

Its subcellular location is the secreted. Antibacterial peptide, that adopts an alpha helical conformation which can disrupt bacterial membranes. Each caerin displays a different antimicrobial specificity. This Ranoidea caerulea (Green tree frog) protein is Caerin-1.5.